The sequence spans 838 residues: V-type proton ATPase 116 kDa subunit a 1 (838 aa).

Residues 1 to 388 (MGELFRSEEM…DAYGIGTYRE (388 aa)) lie on the Cytoplasmic side of the membrane. Phosphothreonine is present on residues Thr-250 and Thr-360. Tyr-364 is subject to Phosphotyrosine. The chain crosses the membrane as a helical span at residues 389–407 (INPAPYTVITFPFLFAVMF). The Vacuolar portion of the chain corresponds to 408 to 409 (GD). The helical transmembrane segment at 410-426 (FGHGILMTLFAVWMVLR) threads the bilayer. Over 427–441 (ESRILSQKNENEMFS) the chain is Cytoplasmic. Residues 442–471 (MVFSGRYIILLMGLFSIYTGLIYNDCFSKS) form a helical membrane-spanning segment. Residues 472 to 535 (LNIFGSSWSV…ATNKLTFLNS (64 aa)) are Vacuolar-facing. A helical membrane pass occupies residues 536–555 (FKMKMSVILGIIHMLFGVSL). The Cytoplasmic portion of the chain corresponds to 556 to 573 (SLFNHIYFKKPLNIYFGF). Residues 574–594 (IPEIIFMSSLFGYLVILIFYK) traverse the membrane as a helical segment. Over 595–639 (WTAYDAHSSRNAPSLLIHFINMFLFSYPESGNAMLYSGQKGIQCF) the chain is Vacuolar. Residues 640 to 659 (LIVVAMLCVPWMLLFKPLIL) traverse the membrane as a helical segment. At 660–725 (RHQYLRKKHL…DTMVHQAIHT (66 aa)) the chain is on the cytoplasmic side. The helical transmembrane segment at 726-750 (IEYCLGCISNTASYLRLWALSLAHA) threads the bilayer. Topologically, residues 751–771 (QLSEVLWTMVIHIGLHVRSLA) are vacuolar. Residues 772–810 (GGLGLFFIFAAFATLTVAILLIMEGLSAFLHALRLHWVE) traverse the membrane as a helical segment. Residues 811 to 838 (FQNKFYTGTGFKFLPFSFEHIREGKFDE) lie on the Cytoplasmic side of the membrane.

Belongs to the V-ATPase 116 kDa subunit family. As to quaternary structure, V-ATPase is a heteromultimeric enzyme made up of two complexes: the ATP-hydrolytic V1 complex and the proton translocation V0 complex. The V1 complex consists of three catalytic AB heterodimers that form a heterohexamer, three peripheral stalks each consisting of EG heterodimers, one central rotor including subunits D and F, and the regulatory subunits C and H. The proton translocation complex V0 consists of the proton transport subunit a, a ring of proteolipid subunits c9c'', rotary subunit d, subunits e and f, and the accessory subunits ATP6AP1/Ac45 and ATP6AP2/PRR. Interacts with SPAAR. Expressed in brain (at protein level). As to expression, expressed in heart, kidney, liver, spleen, and to a lesser extent in brain.

The protein resides in the cytoplasmic vesicle. It is found in the clathrin-coated vesicle membrane. Its subcellular location is the secretory vesicle. It localises to the synaptic vesicle membrane. The protein localises to the melanosome. Functionally, subunit of the V0 complex of vacuolar(H+)-ATPase (V-ATPase), a multisubunit enzyme composed of a peripheral complex (V1) that hydrolyzes ATP and a membrane integral complex (V0) that translocates protons. V-ATPase is responsible for the acidification of various organelles, such as lysosomes, endosomes, the trans-Golgi network, and secretory granules, including synaptic vesicles. In certain cell types, can be exported to the plasma membrane, where it is involved in the acidification of the extracellular environment. Required for assembly and activity of the vacuolar ATPase. Through its action on compartment acidification, plays an essential role in neuronal development in terms of integrity and connectivity of neurons. In Rattus norvegicus (Rat), this protein is V-type proton ATPase 116 kDa subunit a 1 (Atp6v0a1).